The sequence spans 501 residues: L-arabinose isomerase (501 aa).

Mn(2+) contacts are provided by Glu306, Glu333, His350, and His450.

The protein belongs to the arabinose isomerase family. Homohexamer. Mn(2+) serves as cofactor.

The enzyme catalyses beta-L-arabinopyranose = L-ribulose. It functions in the pathway carbohydrate degradation; L-arabinose degradation via L-ribulose; D-xylulose 5-phosphate from L-arabinose (bacterial route): step 1/3. Its function is as follows. Catalyzes the conversion of L-arabinose to L-ribulose. The protein is L-arabinose isomerase of Pectobacterium atrosepticum (strain SCRI 1043 / ATCC BAA-672) (Erwinia carotovora subsp. atroseptica).